A 501-amino-acid chain; its full sequence is Glycerol kinase (501 aa).

Thr-14 serves as a coordination point for ADP. The ATP site is built by Thr-14, Thr-15, and Ser-16. Residue Thr-14 participates in sn-glycerol 3-phosphate binding. Residue Arg-18 coordinates ADP. Positions 84, 85, 136, and 246 each coordinate sn-glycerol 3-phosphate. Residues Arg-84, Glu-85, Tyr-136, Asp-246, and Gln-247 each contribute to the glycerol site. Thr-268 and Gly-311 together coordinate ADP. Thr-268, Gly-311, Gln-315, and Gly-412 together coordinate ATP. Residues Gly-412 and Asn-416 each contribute to the ADP site.

Belongs to the FGGY kinase family. Homotetramer and homodimer (in equilibrium).

It carries out the reaction glycerol + ATP = sn-glycerol 3-phosphate + ADP + H(+). It participates in polyol metabolism; glycerol degradation via glycerol kinase pathway; sn-glycerol 3-phosphate from glycerol: step 1/1. Activated by phosphorylation and inhibited by fructose 1,6-bisphosphate (FBP). Key enzyme in the regulation of glycerol uptake and metabolism. Catalyzes the phosphorylation of glycerol to yield sn-glycerol 3-phosphate. This is Glycerol kinase from Desulforamulus reducens (strain ATCC BAA-1160 / DSM 100696 / MI-1) (Desulfotomaculum reducens).